We begin with the raw amino-acid sequence, 88 residues long: Small ribosomal subunit protein bS20 (88 aa).

This sequence belongs to the bacterial ribosomal protein bS20 family.

Its function is as follows. Binds directly to 16S ribosomal RNA. In Natranaerobius thermophilus (strain ATCC BAA-1301 / DSM 18059 / JW/NM-WN-LF), this protein is Small ribosomal subunit protein bS20.